We begin with the raw amino-acid sequence, 122 residues long: Small ribosomal subunit protein uS8c (122 aa).

It belongs to the universal ribosomal protein uS8 family. As to quaternary structure, part of the 30S ribosomal subunit.

The protein resides in the plastid. Its subcellular location is the chloroplast. Functionally, one of the primary rRNA binding proteins, it binds directly to 16S rRNA central domain where it helps coordinate assembly of the platform of the 30S subunit. The polypeptide is Small ribosomal subunit protein uS8c (rps8) (Ostreococcus tauri).